Here is an 80-residue protein sequence, read N- to C-terminus: ATP synthase subunit c (80 aa).

Helical transmembrane passes span 8–28 and 55–75; these read MIYF…AIGI and IVMG…LYLI.

Belongs to the ATPase C chain family. F-type ATPases have 2 components, F(1) - the catalytic core - and F(0) - the membrane proton channel. F(1) has five subunits: alpha(3), beta(3), gamma(1), delta(1), epsilon(1). F(0) has three main subunits: a(1), b(2) and c(10-14). The alpha and beta chains form an alternating ring which encloses part of the gamma chain. F(1) is attached to F(0) by a central stalk formed by the gamma and epsilon chains, while a peripheral stalk is formed by the delta and b chains.

It localises to the cell inner membrane. Its function is as follows. F(1)F(0) ATP synthase produces ATP from ADP in the presence of a proton or sodium gradient. F-type ATPases consist of two structural domains, F(1) containing the extramembraneous catalytic core and F(0) containing the membrane proton channel, linked together by a central stalk and a peripheral stalk. During catalysis, ATP synthesis in the catalytic domain of F(1) is coupled via a rotary mechanism of the central stalk subunits to proton translocation. Functionally, key component of the F(0) channel; it plays a direct role in translocation across the membrane. A homomeric c-ring of between 10-14 subunits forms the central stalk rotor element with the F(1) delta and epsilon subunits. The polypeptide is ATP synthase subunit c (Aeromonas salmonicida (strain A449)).